The primary structure comprises 281 residues: tRNA N(3)-cytidine methyltransferase METTL8, mitochondrial (281 aa).

A mitochondrion-targeting transit peptide spans 1 to 22 (MNVIWRSCICRLRQGKVPHRCQ). Lysine 80 is covalently cross-linked (Glycyl lysine isopeptide (Lys-Gly) (interchain with G-Cter in SUMO)). Tryptophan 89 and tyrosine 93 together coordinate S-adenosyl-L-methionine. Polar residues predominate over residues 139-151 (RTQGTETHCQESF). The disordered stretch occupies residues 139–180 (RTQGTETHCQESFVSPEPGSRGRSAPDPDLEEYSKGPGKTEP). 3 residues coordinate S-adenosyl-L-methionine: glycine 194, aspartate 220, and aspartate 246.

Belongs to the methyltransferase superfamily. METL family. Interacts with EP300. Absent in embryonic lung but is induced in a fibroblast cell line by stretch. In terms of tissue distribution, expressed in undifferentiated progenitor cells, while its expression is inhibited by stretch. As to expression, absent in undifferentiated embryonic lung mesenchymal cells, but expression is induced by stretch. Expressed in mature adipose tissue.

It is found in the mitochondrion. It localises to the cytoplasm. The protein resides in the nucleus. The catalysed reaction is cytidine(32) in tRNA(Ser) + S-adenosyl-L-methionine = N(3)-methylcytidine(32) in tRNA(Ser) + S-adenosyl-L-homocysteine + H(+). It carries out the reaction cytidine(32) in tRNA(Thr) + S-adenosyl-L-methionine = N(3)-methylcytidine(32) in tRNA(Thr) + S-adenosyl-L-homocysteine + H(+). The enzyme catalyses a cytidine in mRNA + S-adenosyl-L-methionine = an N(3)-methylcytidine in mRNA + S-adenosyl-L-homocysteine + H(+). In terms of biological role, mitochondrial S-adenosyl-L-methionine-dependent methyltransferase that mediates N(3)-methylcytidine modification of residue 32 of the tRNA anticodon loop of mitochondrial tRNA(Ser)(UCN) and tRNA(Thr). N(3)-methylcytidine methylation modification regulates mitochondrial translation efficiency and is required for activity of the respiratory chain. N(3)-methylcytidine methylation of mitochondrial tRNA(Ser)(UCN) requires the formation of N(6)-dimethylallyladenosine(37) (i6A37) by TRIT1 as prerequisite. May also mediate N(3)-methylcytidine modification of mRNAs. The existence of N(3)-methylcytidine modification on mRNAs is however unclear, and additional evidences are required to confirm the role of the N(3)-methylcytidine-specific mRNA methyltransferase activity of METTL8 in vivo. Overexpression in lung progenitor cells stimulates smooth muscle-specific gene expression and suppresses adipogenic gene expression. Functionally, stimulates adipogenesis. The chain is tRNA N(3)-cytidine methyltransferase METTL8, mitochondrial from Mus musculus (Mouse).